Reading from the N-terminus, the 274-residue chain is NAD kinase (274 aa).

Asp-59 acts as the Proton acceptor in catalysis. NAD(+) contacts are provided by residues 59 to 60 (DG), Lys-64, 128 to 129 (ND), Asp-158, 169 to 174 (TAYALS), and Ala-193.

Belongs to the NAD kinase family. Requires a divalent metal cation as cofactor.

It is found in the cytoplasm. The enzyme catalyses NAD(+) + ATP = ADP + NADP(+) + H(+). In terms of biological role, involved in the regulation of the intracellular balance of NAD and NADP, and is a key enzyme in the biosynthesis of NADP. Catalyzes specifically the phosphorylation on 2'-hydroxyl of the adenosine moiety of NAD to yield NADP. The chain is NAD kinase from Petrotoga mobilis (strain DSM 10674 / SJ95).